The chain runs to 374 residues: Phosphate-binding protein PstS1 (374 aa).

Residues 1 to 23 (MKIRLHTLLAVLTAAPLLLAAAG) form the signal peptide. Residue cysteine 24 is the site of N-palmitoyl cysteine attachment. Cysteine 24 carries the S-diacylglycerol cysteine lipid modification. Residues 25 to 48 (GSKPPSGSPETGAGAGTVATTPAS) are disordered. Phosphate contacts are provided by residues 58–60 (STL), serine 88, aspartate 106, and 189–191 (SGD).

It belongs to the PstS family. The complex is composed of two ATP-binding proteins (PstB), two transmembrane proteins (PstC and PstA) and a solute-binding protein (PstS).

The protein localises to the cell membrane. It localises to the secreted. Functions in inorganic phosphate uptake, a phosphate-binding protein, although probably not the main uptake protein under phosphate starvation. Part of the ABC transporter complex PstSACB involved in phosphate import. Functionally, a host TLR2 agonist (toll-like receptor), requires both host TLR1 and TLR2 as coreceptors. The polypeptide is Phosphate-binding protein PstS1 (pstS1) (Mycobacterium bovis (strain BCG / Pasteur 1173P2)).